The chain runs to 346 residues: Phosphoribosylformylglycinamidine cyclo-ligase (346 aa).

Belongs to the AIR synthase family.

The protein localises to the cytoplasm. It catalyses the reaction 2-formamido-N(1)-(5-O-phospho-beta-D-ribosyl)acetamidine + ATP = 5-amino-1-(5-phospho-beta-D-ribosyl)imidazole + ADP + phosphate + H(+). It participates in purine metabolism; IMP biosynthesis via de novo pathway; 5-amino-1-(5-phospho-D-ribosyl)imidazole from N(2)-formyl-N(1)-(5-phospho-D-ribosyl)glycinamide: step 2/2. This chain is Phosphoribosylformylglycinamidine cyclo-ligase, found in Brevibacillus brevis (strain 47 / JCM 6285 / NBRC 100599).